A 257-amino-acid polypeptide reads, in one-letter code: Thiazole synthase (257 aa).

Lys95 serves as the catalytic Schiff-base intermediate with DXP. 1-deoxy-D-xylulose 5-phosphate is bound by residues Gly156, 182-183 (AG), and 204-205 (NT).

This sequence belongs to the ThiG family. As to quaternary structure, homotetramer. Forms heterodimers with either ThiH or ThiS.

The protein resides in the cytoplasm. It catalyses the reaction [ThiS sulfur-carrier protein]-C-terminal-Gly-aminoethanethioate + 2-iminoacetate + 1-deoxy-D-xylulose 5-phosphate = [ThiS sulfur-carrier protein]-C-terminal Gly-Gly + 2-[(2R,5Z)-2-carboxy-4-methylthiazol-5(2H)-ylidene]ethyl phosphate + 2 H2O + H(+). It functions in the pathway cofactor biosynthesis; thiamine diphosphate biosynthesis. Functionally, catalyzes the rearrangement of 1-deoxy-D-xylulose 5-phosphate (DXP) to produce the thiazole phosphate moiety of thiamine. Sulfur is provided by the thiocarboxylate moiety of the carrier protein ThiS. In vitro, sulfur can be provided by H(2)S. This Vibrio vulnificus (strain CMCP6) protein is Thiazole synthase.